Reading from the N-terminus, the 1765-residue chain is Tight junction protein ZO-1 (1765 aa).

The PDZ 1 domain occupies 23–110 (TVTLHRAPGF…NAKITIRRKK (88 aa)). A compositionally biased stretch (basic residues) spans 102-112 (AKITIRRKKKV). Positions 102 to 189 (AKITIRRKKK…QPAKPTKVTL (88 aa)) are disordered. Residues 123–136 (PVSDNEDDSYDEDV) show a composition bias toward acidic residues. Position 125 is a phosphoserine (serine 125). Tyrosine 132 carries the phosphotyrosine modification. Basic and acidic residues predominate over residues 149–175 (RRGEKSWARDRSASRDRSLSPRSDRRS). Phosphoserine occurs at positions 175, 178, and 179. Phosphothreonine is present on threonine 185. In terms of domain architecture, PDZ 2 spans 186-264 (KVTLVKSRKN…KLKMVVQRDE (79 aa)). Phosphoserine is present on residues serine 212 and serine 241. Position 267 is a phosphothreonine (threonine 267). Serine 275, serine 277, serine 280, serine 284, serine 290, serine 294, serine 297, serine 300, serine 323, serine 329, serine 334, serine 337, and serine 353 each carry phosphoserine. The tract at residues 296-363 (ASDHSVRSHD…TPVKHVDDHT (68 aa)) is disordered. Residues 299 to 308 (HSVRSHDRPP) are compositionally biased toward basic and acidic residues. The span at 325–338 (HSTQSPQQPSNGSL) shows a compositional bias: polar residues. Threonine 354 carries the post-translational modification Phosphothreonine. The region spanning 421 to 502 (SMKLVKFRKG…GEEVTILAQK (82 aa)) is the PDZ 3 domain. An SH3 domain is found at 516-584 (GDSFYIRTHF…PNKNRAEQLA (69 aa)). 2 positions are modified to phosphoserine: serine 617 and serine 622. Residues 633-876 (YERVVLREAG…GTPPESAITR (244 aa)) form an occludin (OCLN)-binding region region. Residues 690 to 791 (RLHTIKQIID…WYGALKEAIQ (102 aa)) enclose the Guanylate kinase-like domain. Threonine 809 is modified (phosphothreonine). Residues serine 810 and serine 821 each carry the phosphoserine modification. Residue tyrosine 822 is modified to Phosphotyrosine. A phosphoserine mark is found at serine 824, serine 828, and serine 837. 2 disordered regions span residues 825–941 (APGS…PASS) and 1023–1042 (ALGHPGQRLDKEPNPAYDPQ). Residues threonine 846, threonine 848, threonine 854, threonine 861, and threonine 868 each carry the phosphothreonine modification. The segment covering 879-892 (EPVREDSSGMHHEN) has biased composition (basic and acidic residues). Residues 893 to 906 (QTYPPYSPQAQPQA) show a composition bias toward low complexity. At serine 912 the chain carries Phosphoserine. Serine 1071 bears the Phosphoserine mark. Residues 1092–1585 (SYYDDKQPYP…SSTQPPEFDS (494 aa)) form a disordered region. Basic and acidic residues predominate over residues 1106 to 1124 (DTQHPRDLDSRQHPEEASE). Tyrosine 1139 and tyrosine 1164 each carry phosphotyrosine. The actin-binding region (ABR) stretch occupies residues 1150-1370 (RTSTLRHEEQ…FDRRSFESKP (221 aa)). 2 stretches are compositionally biased toward basic and acidic residues: residues 1268-1285 (KMFENKRSASLENKKDVN) and 1335-1346 (PPEDIVRSNHYD). At tyrosine 1353 the chain carries Phosphotyrosine. Phosphoserine is present on serine 1365. Low complexity predominate over residues 1388–1399 (SQSQPNFSSYSS). Over residues 1401–1418 (GKPETDAMDRSFSEKRYD) the composition is skewed to basic and acidic residues. Serine 1411 carries the post-translational modification Phosphoserine. Composition is skewed to polar residues over residues 1442–1468 (NSSLHIHSKAAQSEGNSVSLDFQNSYI) and 1509–1519 (GAEQTQKTITP). A compositionally biased stretch (basic and acidic residues) spans 1535–1544 (PFERKFESPK). A phosphoserine mark is found at serine 1542 and serine 1614. Residues 1631 to 1765 (ATARGIFNSN…NCVSVLIDHF (135 aa)) form the ZU5 domain.

It belongs to the MAGUK family. Homodimer. Forms heterodimers TJP3. Forms a heterodimer (via PDZ2 domain) with TJP2/ZO2 (via PDZ2 domain). Interacts with OCLN. Interacts with CALM, claudins, CGN/cingulin, CXADR, GJA12, GJD3 and UBN1. Interacts (via ZU5 domain) with CDC42BPB and MYZAP. Interacts (via PDZ domain) with GJA1. Interacts (via PDZ domains) with ANKRD2. Interacts with BVES (via the C-terminus cytoplasmic tail). Interacts with HSPA4. Interacts with KIRREL1. Interacts with DLL1. Interacts with USP53 (via the C-terminal region). Interacts with DNMBP (via C-terminal domain); required for the apical cell-cell junction localization of DNMBP. Interacts with SPEF1. Interacts (via N-terminus) with CTNNA1. Interacts with CLDN18. Interacts with CLDN16 (via TRV motif); this is a prerequisite for anchoring of CLDN16 at the tight junction. Interacts with PKP1; the interaction facilitates TJP1/ZO-1 localization to the plasma membrane. In terms of processing, phosphorylated at tyrosine redidues in response to epidermal growth factor (EGF). This response is dependent on an intact actin microfilament system. Dephosphorylated by Ptprj.

Its subcellular location is the cell membrane. The protein localises to the cell junction. It is found in the tight junction. The protein resides in the gap junction. Its function is as follows. TjpP1, Tjp2, and Tjp3 are closely related scaffolding proteins that link tight junction (TJ) transmembrane proteins such as claudins, junctional adhesion molecules, and occludin to the actin cytoskeleton. The tight junction acts to limit movement of substances through the paracellular space and as a boundary between the compositionally distinct apical and basolateral plasma membrane domains of epithelial and endothelial cells. Necessary for lumenogenesis, and particularly efficient epithelial polarization and barrier formation. Plays a role in the regulation of cell migration by targeting Cdc42bpb to the leading edge of migrating cells. Plays an important role in podosome formation and associated function, thus regulating cell adhesion and matrix remodeling. With Tjp2 and Tjp3, participates in the junctional retention and stability of the transcription factor Dbpa, but is not involved in its shuttling to the nucleus. May play a role in mediating cell morphology changes during ameloblast differentiation via its role in tight junctions. In Rattus norvegicus (Rat), this protein is Tight junction protein ZO-1.